A 130-amino-acid chain; its full sequence is Small ribosomal subunit protein uS11 (130 aa).

This sequence belongs to the universal ribosomal protein uS11 family. As to quaternary structure, part of the 30S ribosomal subunit. Interacts with proteins S7 and S18. Binds to IF-3.

Functionally, located on the platform of the 30S subunit, it bridges several disparate RNA helices of the 16S rRNA. Forms part of the Shine-Dalgarno cleft in the 70S ribosome. The chain is Small ribosomal subunit protein uS11 from Buchnera aphidicola subsp. Schizaphis graminum (strain Sg).